The primary structure comprises 327 residues: uncharacterized protein (327 aa).

The chain crosses the membrane as a helical span at residues 13–33 (IICIISIIVLLLIIISLYPHK).

Its subcellular location is the membrane. This is an uncharacterized protein from Caenorhabditis elegans.